Consider the following 57-residue polypeptide: COP9 signalosome complex subunit 9 (57 aa).

Threonine 26 is subject to Phosphothreonine.

It belongs to the CSN9 family. Component of the CSN complex, composed of COPS1/GPS1, COPS2, COPS3, COPS4, COPS5, COPS6, COPS7 (COPS7A or COPS7B), COPS8 and COPS9. In the complex, it interacts directly with COPS3, COPS5 and COPS6.

Its subcellular location is the nucleus. It localises to the cytoplasm. The protein resides in the nucleoplasm. In terms of biological role, component of the COP9 signalosome complex (CSN), a complex involved in various cellular and developmental processes. The CSN complex is an essential regulator of the ubiquitin (Ubl) conjugation pathway by mediating the deneddylation of the cullin subunits of SCF-type E3 ligase complexes, leading to decrease the Ubl ligase activity of SCF-type complexes such as SCF, CSA or DDB2. The complex is also involved in phosphorylation of p53/TP53, c-jun/JUN, IkappaBalpha/NFKBIA, ITPK1 and IRF8/ICSBP, possibly via its association with CK2 and PKD kinases. CSN-dependent phosphorylation of TP53 and JUN promotes and protects degradation by the Ubl system, respectively. Plays a role in cell proliferation. This is COP9 signalosome complex subunit 9 from Mus musculus (Mouse).